Consider the following 316-residue polypeptide: Transaldolase (316 aa).

The active-site Schiff-base intermediate with substrate is lysine 127.

This sequence belongs to the transaldolase family. Type 2 subfamily.

The protein localises to the cytoplasm. The catalysed reaction is D-sedoheptulose 7-phosphate + D-glyceraldehyde 3-phosphate = D-erythrose 4-phosphate + beta-D-fructose 6-phosphate. It participates in carbohydrate degradation; pentose phosphate pathway; D-glyceraldehyde 3-phosphate and beta-D-fructose 6-phosphate from D-ribose 5-phosphate and D-xylulose 5-phosphate (non-oxidative stage): step 2/3. In terms of biological role, transaldolase is important for the balance of metabolites in the pentose-phosphate pathway. This is Transaldolase (tal) from Helicobacter pylori (strain ATCC 700392 / 26695) (Campylobacter pylori).